We begin with the raw amino-acid sequence, 475 residues long: Ribulose bisphosphate carboxylase large chain (475 aa).

Positions 1–2 (MS) are excised as a propeptide. Proline 3 is modified (N-acetylproline). Threonine 65, asparagine 123, and threonine 173 together coordinate substrate. The Proton acceptor role is filled by lysine 175. Residue lysine 177 coordinates substrate. Mg(2+) is bound by residues lysine 201, aspartate 203, and glutamate 204. N6-carboxylysine is present on lysine 201. Residues glutamate 204, histidine 294, arginine 295, histidine 327, lysine 334, serine 379, glycine 381, glycine 403, and glycine 404 each contribute to the substrate site. Histidine 294 acts as the Proton acceptor in catalysis.

Belongs to the RuBisCO large chain family. Type I subfamily. As to quaternary structure, heterohexadecamer of 8 large chains and 8 small chains. Mg(2+) is required as a cofactor. Post-translationally, the disulfide bond which can form between Cys-247 in the large chain dimeric partners within the hexadecamer appears to be associated with oxidative stress and protein turnover. The disulfide bonds reported in 1RBO may be the result of oxidation during crystallization.

It is found in the plastid. The protein resides in the chloroplast. The enzyme catalyses 2 (2R)-3-phosphoglycerate + 2 H(+) = D-ribulose 1,5-bisphosphate + CO2 + H2O. It carries out the reaction D-ribulose 1,5-bisphosphate + O2 = 2-phosphoglycolate + (2R)-3-phosphoglycerate + 2 H(+). With respect to regulation, abscisic acid (ABA) causes weak inhibition of RuBisCO catalytic activity, but more potent inhibition of RuBisCO activation. Functionally, ruBisCO catalyzes two reactions: the carboxylation of D-ribulose 1,5-bisphosphate, the primary event in carbon dioxide fixation, as well as the oxidative fragmentation of the pentose substrate in the photorespiration process. Both reactions occur simultaneously and in competition at the same active site. Binds to abscisic acid (ABA) which has weakly inhibits carboxylation and more strongly inhibits enzyme activation. This is Ribulose bisphosphate carboxylase large chain from Spinacia oleracea (Spinach).